The following is an 89-amino-acid chain: Small ribosomal subunit protein uS15 (89 aa).

The protein belongs to the universal ribosomal protein uS15 family. As to quaternary structure, part of the 30S ribosomal subunit. Forms a bridge to the 50S subunit in the 70S ribosome, contacting the 23S rRNA.

In terms of biological role, one of the primary rRNA binding proteins, it binds directly to 16S rRNA where it helps nucleate assembly of the platform of the 30S subunit by binding and bridging several RNA helices of the 16S rRNA. Functionally, forms an intersubunit bridge (bridge B4) with the 23S rRNA of the 50S subunit in the ribosome. This is Small ribosomal subunit protein uS15 from Enterobacter sp. (strain 638).